Reading from the N-terminus, the 373-residue chain is Hydrogenase maturation factor HypD (373 aa).

Fe cation-binding residues include C41, C69, and C72.

The protein belongs to the HypD family. Monomer. Interacts with HypC. Forms a complex with HypC, or HybG, and HypE. It depends on [4Fe-4S] cluster as a cofactor.

The protein operates within protein modification; [NiFe] hydrogenase maturation. Its function is as follows. Involved in the maturation of [NiFe] hydrogenases. Involved in the biosynthesis of the Fe(CN)(2)CO cofactor. HypD may act as a scaffold on which the Fe(CN)(2)CO cofactor is formed. In complex with HypC, accepts the cyanide ligand generated by HypF and HypE, and also coordinates the carbon monoxide ligand. Required for the formation of all three hydrogenase isoenzymes. The sequence is that of Hydrogenase maturation factor HypD from Escherichia coli (strain K12).